Here is a 255-residue protein sequence, read N- to C-terminus: tRNA pseudouridine synthase A (255 aa).

The active-site Nucleophile is Asp43. Tyr94 serves as a coordination point for substrate.

This sequence belongs to the tRNA pseudouridine synthase TruA family.

The catalysed reaction is uridine(38/39/40) in tRNA = pseudouridine(38/39/40) in tRNA. Functionally, formation of pseudouridine at positions 38, 39 and 40 in the anticodon stem and loop of transfer RNAs. The sequence is that of tRNA pseudouridine synthase A from Pyrobaculum neutrophilum (strain DSM 2338 / JCM 9278 / NBRC 100436 / V24Sta) (Thermoproteus neutrophilus).